Here is a 330-residue protein sequence, read N- to C-terminus: ADP-L-glycero-D-manno-heptose-6-epimerase (330 aa).

Residues 11–12, 32–33, Lys-39, Lys-54, 75–79, and Asn-92 each bind NADP(+); these read FI, DN, and EGACS. The active-site Proton acceptor is Tyr-139. Lys-143 lines the NADP(+) pocket. Asn-168 lines the substrate pocket. NADP(+)-binding residues include Val-169 and Lys-177. Residue Lys-177 is the Proton acceptor of the active site. Substrate contacts are provided by residues Arg-179, His-186, 200 to 203, Arg-213, and Tyr-292; that span reads FGEY.

Belongs to the NAD(P)-dependent epimerase/dehydratase family. HldD subfamily. Homopentamer. The cofactor is NADP(+).

It carries out the reaction ADP-D-glycero-beta-D-manno-heptose = ADP-L-glycero-beta-D-manno-heptose. The protein operates within nucleotide-sugar biosynthesis; ADP-L-glycero-beta-D-manno-heptose biosynthesis; ADP-L-glycero-beta-D-manno-heptose from D-glycero-beta-D-manno-heptose 7-phosphate: step 4/4. In terms of biological role, catalyzes the interconversion between ADP-D-glycero-beta-D-manno-heptose and ADP-L-glycero-beta-D-manno-heptose via an epimerization at carbon 6 of the heptose. The protein is ADP-L-glycero-D-manno-heptose-6-epimerase of Burkholderia multivorans (strain ATCC 17616 / 249).